Consider the following 554-residue polypeptide: Asparagine--tRNA ligase, cytoplasmic (554 aa).

The protein belongs to the class-II aminoacyl-tRNA synthetase family.

Its subcellular location is the cytoplasm. It is found in the cytosol. The catalysed reaction is tRNA(Asn) + L-asparagine + ATP = L-asparaginyl-tRNA(Asn) + AMP + diphosphate + H(+). In terms of biological role, catalyzes the attachment of asparagine to tRNA(Asn) in a two-step reaction: asparagine is first activated by ATP to form Asn-AMP and then transferred to the acceptor end of tRNA(Asn). The polypeptide is Asparagine--tRNA ligase, cytoplasmic (Saccharomyces cerevisiae (strain ATCC 204508 / S288c) (Baker's yeast)).